Here is a 434-residue protein sequence, read N- to C-terminus: Tryptophan--tRNA ligase (434 aa).

ATP-binding positions include 14-16 (TTS) and 22-23 (GN). A 'HIGH' region motif is present at residues 15-23 (TSGTPHLGN). L-tryptophan is bound at residue D147. ATP-binding positions include 159 to 161 (GRD), L199, and 206 to 210 (KMSKS). The 'KMSKS' region motif lies at 206–210 (KMSKS).

Belongs to the class-I aminoacyl-tRNA synthetase family. As to quaternary structure, homodimer.

It is found in the cytoplasm. The enzyme catalyses tRNA(Trp) + L-tryptophan + ATP = L-tryptophyl-tRNA(Trp) + AMP + diphosphate + H(+). Catalyzes the attachment of tryptophan to tRNA(Trp). This chain is Tryptophan--tRNA ligase, found in Xylella fastidiosa (strain 9a5c).